The following is a 249-amino-acid chain: Metallo-beta-lactamase type 2 (249 aa).

The N-terminal stretch at 1 to 22 (MLKKIKISLILALGLTSLQAFG) is a signal peptide. Zn(2+)-binding residues include histidine 98, histidine 100, aspartate 102, histidine 161, and cysteine 180. Lysine 183 is a binding site for substrate. Residue histidine 222 participates in Zn(2+) binding.

Belongs to the metallo-beta-lactamase superfamily. Class-B beta-lactamase family. As to quaternary structure, monomer. The cofactor is Zn(2+).

The protein resides in the periplasm. The catalysed reaction is a beta-lactam + H2O = a substituted beta-amino acid. Its function is as follows. Confers resistance to the different beta-lactams antibiotics (penicillin, cephalosporin and carbapenem) via the hydrolysis of the beta-lactam ring. The chain is Metallo-beta-lactamase type 2 (blaB3) from Elizabethkingia meningoseptica (Chryseobacterium meningosepticum).